We begin with the raw amino-acid sequence, 81 residues long: Large ribosomal subunit protein bL31 (81 aa).

This sequence belongs to the bacterial ribosomal protein bL31 family. Type A subfamily. As to quaternary structure, part of the 50S ribosomal subunit.

Its function is as follows. Binds the 23S rRNA. The chain is Large ribosomal subunit protein bL31 (rpmE) from Fusobacterium nucleatum subsp. nucleatum (strain ATCC 25586 / DSM 15643 / BCRC 10681 / CIP 101130 / JCM 8532 / KCTC 2640 / LMG 13131 / VPI 4355).